The primary structure comprises 422 residues: Carboxypeptidase B2 (422 aa).

An N-terminal signal peptide occupies residues Met-1–Ala-21. Positions Phe-22 to Arg-113 are cleaved as a propeptide — activation peptide. 4 N-linked (GlcNAc...) asparagine glycosylation sites follow: Asn-43, Asn-72, Asn-84, and Asn-107. In terms of domain architecture, Peptidase M14 spans Gln-121–Val-418. A disulfide bridge links Cys-177 with Cys-190. Residues His-180 and Glu-183 each contribute to the Zn(2+) site. Substrate is bound by residues His-180–Glu-183 and Arg-238. N-linked (GlcNAc...) asparagine glycosylation occurs at Asn-240. 2 cysteine pairs are disulfide-bonded: Cys-249–Cys-273 and Cys-264–Cys-278. Asn-255–Arg-256 lines the substrate pocket. Zn(2+) is bound at residue His-309. Ser-310–Tyr-311 is a binding site for substrate. Asn-322 carries an N-linked (GlcNAc...) asparagine glycan. Residue Tyr-362 participates in substrate binding. Glu-384 functions as the Proton donor/acceptor in the catalytic mechanism.

It belongs to the peptidase M14 family. It depends on Zn(2+) as a cofactor. Plasma; synthesized in the liver.

The protein localises to the secreted. The enzyme catalyses Release of C-terminal Arg and Lys from a polypeptide.. With respect to regulation, TAFI/CPB2 is unique among carboxypeptidases in that it spontaneously inactivates with a short half-life, a property that is crucial for its role in controlling blood clot lysis. The zymogen is stabilized by interactions with the activation peptide. Release of the activation peptide increases a dynamic flap mobility and in time this leads to conformational changes that disrupt the catalytic site and expose a cryptic thrombin-cleavage site present at Arg-323. Functionally, cleaves C-terminal arginine or lysine residues from biologically active peptides such as kinins or anaphylatoxins in the circulation thereby regulating their activities. Down-regulates fibrinolysis by removing C-terminal lysine residues from fibrin that has already been partially degraded by plasmin. In Mus musculus (Mouse), this protein is Carboxypeptidase B2 (Cpb2).